The following is a 106-amino-acid chain: Insulin-like peptide 03 (106 aa).

A signal peptide spans 1-18 (MLFYFGLAVIFLIDSSQT). Residues 19-34 (QTLYKVNEVGGSQVDR) constitute a propeptide that is removed on maturation. Intrachain disulfides connect C37/C93, C49/C106, and C92/C97. The propeptide at 52-82 (KKRQNIPRKYGRDPNNILEKEEFAKRFLRVR) is c peptide.

The protein belongs to the insulin family.

The protein resides in the secreted. In terms of biological role, insulin decreases blood glucose concentration. May have evolved to activate insulin receptors (INSR) in vertebrates. Molecular docking studies reveals unique interaction with the human insulin receptor. In vivo, insulin-like peptide injection reduces blood glucose levels in two models of zebrafish diabetes (streptozotocin- and glucose-induced). Also shorter swimming distance of zebrafish larvae, an effect which is not observed with human insulin. The protein is Insulin-like peptide 03 of Exaiptasia diaphana (Tropical sea anemone).